A 116-amino-acid polypeptide reads, in one-letter code: Protein TRACHEARY ELEMENT DIFFERENTIATION-RELATED 6 (116 aa).

Over 1-24 (MASTDSVYRPTPTPDHDTTVVVVV) the chain is Extracellular. Residues 25-45 (FVSLGCVMFLAFLAFVIWFLI) traverse the membrane as a helical segment. At 46–116 (KKRSRKHRER…GVGSSVVSRS (71 aa)) the chain is on the cytoplasmic side.

As to quaternary structure, interacts with CESA7/IRX3, a subunit of the secondary cell wall (SCW)-related cellulose synthase complex. As to expression, expressed preferentially in differentiating vessel elements in seedlings.

The protein localises to the cell membrane. The protein resides in the secreted. It localises to the cell wall. In terms of biological role, involved in the secondary cell wall (SCW) formation of vessel elements (e.g. protoxylem and metaxylem), thus promoting tracheary element (TE) differentiation. The chain is Protein TRACHEARY ELEMENT DIFFERENTIATION-RELATED 6 from Arabidopsis thaliana (Mouse-ear cress).